The sequence spans 185 residues: Ribosome-recycling factor (185 aa).

This sequence belongs to the RRF family.

The protein localises to the cytoplasm. Responsible for the release of ribosomes from messenger RNA at the termination of protein biosynthesis. May increase the efficiency of translation by recycling ribosomes from one round of translation to another. This is Ribosome-recycling factor from Halothermothrix orenii (strain H 168 / OCM 544 / DSM 9562).